A 406-amino-acid polypeptide reads, in one-letter code: COP9 signalosome complex subunit 4 (406 aa).

Ala2 bears the N-acetylalanine mark. The residue at position 25 (Lys25) is an N6-acetyllysine. The PCI domain maps to Tyr197–Ala366.

The protein belongs to the CSN4 family. As to quaternary structure, component of the CSN complex, composed of COPS1/GPS1, COPS2, COPS3, COPS4, COPS5, COPS6, COPS7 (COPS7A or COPS7B), COPS8 and COPS9. In the complex, it probably interacts directly with COPS1, COPS2, COPS3, COPS5, COPS6, COPS7 (COPS7A or COPS7B) and COPS8. Interacts with TOR1A; the interaction is direct and associates TOR1A and SNAPIN with the CSN complex. Interacts with STON2; controls STON2 neddylation levels. Interacts with ERCC6.

It is found in the cytoplasm. It localises to the nucleus. The protein localises to the cytoplasmic vesicle. The protein resides in the secretory vesicle. Its subcellular location is the synaptic vesicle. Functionally, component of the COP9 signalosome complex (CSN), a complex involved in various cellular and developmental processes. The CSN complex is an essential regulator of the ubiquitin (Ubl) conjugation pathway by mediating the deneddylation of the cullin subunits of SCF-type E3 ligase complexes, leading to decrease the Ubl ligase activity of SCF-type complexes such as SCF, CSA or DDB2. Also involved in the deneddylation of non-cullin subunits such as STON2. The complex is also involved in phosphorylation of p53/TP53, c-jun/JUN, IkappaBalpha/NFKBIA, ITPK1, IRF8/ICSBP and SNAPIN, possibly via its association with CK2 and PKD kinases. CSN-dependent phosphorylation of TP53 and JUN promotes and protects degradation by the Ubl system, respectively. This Mus musculus (Mouse) protein is COP9 signalosome complex subunit 4 (Cops4).